A 659-amino-acid chain; its full sequence is UDP-glucuronate:xylan alpha-glucuronosyltransferase 1 (659 aa).

Residues 1-14 (MANSPAAPAPTTTT) show a composition bias toward low complexity. The tract at residues 1-20 (MANSPAAPAPTTTTGGDSRR) is disordered. A helical; Signal-anchor for type II membrane protein transmembrane segment spans residues 70-90 (FQIVKLLLFILLSATLFTIIY). The Mn(2+) site is built by aspartate 416 and aspartate 418. Residues 416–418 (DAD), 445–447 (NSG), 472–476 (NGGDQ), and 526–531 (HYLGMK) each bind substrate. A Mn(2+)-binding site is contributed by histidine 526.

Belongs to the glycosyltransferase 8 family. Glycogenin subfamily. The cofactor is Mn(2+).

The protein localises to the golgi apparatus membrane. Its function is as follows. Glycosyltransferase required for the addition of both glucuronic acid and 4-O-methylglucuronic acid branches to xylan in stem cell walls. In association with GUX2, is responsible for almost all of the substitutions of the xylan backbone in stem glucuronoxylan. The protein is UDP-glucuronate:xylan alpha-glucuronosyltransferase 1 (GUX1) of Arabidopsis thaliana (Mouse-ear cress).